A 296-amino-acid polypeptide reads, in one-letter code: Phosphoribosylaminoimidazole-succinocarboxamide synthase (296 aa).

The protein belongs to the SAICAR synthetase family.

The catalysed reaction is 5-amino-1-(5-phospho-D-ribosyl)imidazole-4-carboxylate + L-aspartate + ATP = (2S)-2-[5-amino-1-(5-phospho-beta-D-ribosyl)imidazole-4-carboxamido]succinate + ADP + phosphate + 2 H(+). It functions in the pathway purine metabolism; IMP biosynthesis via de novo pathway; 5-amino-1-(5-phospho-D-ribosyl)imidazole-4-carboxamide from 5-amino-1-(5-phospho-D-ribosyl)imidazole-4-carboxylate: step 1/2. The chain is Phosphoribosylaminoimidazole-succinocarboxamide synthase from Pelobacter propionicus (strain DSM 2379 / NBRC 103807 / OttBd1).